We begin with the raw amino-acid sequence, 712 residues long: Lactoperoxidase (712 aa).

Positions 1-22 are cleaved as a signal peptide; sequence MWVCLQLPVFLASVTLFEVAAS. Residues 23 to 100 constitute a propeptide that is removed on maturation; sequence DTIAQAASTT…WEESFKRLRR (78 aa). Residue Asn106 is glycosylated (N-linked (GlcNAc...) (complex) asparagine; alternate). Residue Asn106 is glycosylated (N-linked (GlcNAc...) (hybrid) asparagine; alternate). 4 disulfides stabilise this stretch: Cys123-Cys284, Cys132-Cys145, Cys246-Cys256, and Cys250-Cys274. Asn212 is a glycosylation site (N-linked (GlcNAc...) (complex) asparagine; alternate). N-linked (GlcNAc...) (high mannose) asparagine; alternate glycosylation occurs at Asn212. Asp225 contributes to the heme b binding site. The active-site Proton acceptor is the His226. Residue Asp227 coordinates Ca(2+). Ca(2+) is bound by residues Thr301, Phe303, Asp305, and Ser307. Ser315 is subject to Phosphoserine. A glycan (N-linked (GlcNAc...) (high mannose) asparagine) is linked at Asn322. Cys354 and Cys365 are oxidised to a cystine. A glycan (N-linked (GlcNAc...) asparagine) is linked at Asn358. Glu375 contributes to the heme b binding site. Asn449 is a glycosylation site (N-linked (GlcNAc...) (complex) asparagine; alternate). N-linked (GlcNAc...) (hybrid) asparagine; alternate glycosylation occurs at Asn449. Asn449 is a glycosylation site (N-linked (GlcNAc...) (high mannose) asparagine; alternate). Residue His468 participates in heme b binding. At Tyr482 the chain carries 3'-nitrotyrosine. 2 disulfides stabilise this stretch: Cys573–Cys630 and Cys671–Cys696.

It belongs to the peroxidase family. XPO subfamily. It depends on Ca(2+) as a cofactor. Heme b serves as cofactor. Mammary gland; milk.

It localises to the secreted. It is found in the cytoplasm. The catalysed reaction is 2 a phenolic donor + H2O2 = 2 a phenolic radical donor + 2 H2O. It carries out the reaction thiocyanate + H2O2 + H(+) = hypothiocyanous acid + H2O. The enzyme catalyses iodide + H2O2 = hypoiodite + H2O. Heme-containing oxidoreductase which catalyzes the conversion of thiocyanate (SCN(-)) into antimicrobial agent hypothiocyanous acid (OSCN(-)) in the presence of hydrogen peroxide (H2O2). Also involved in the conversion of iodide (I(-)) into hypoiodite (IO(-)) in the presence of H2O2. Responsible for the inactivation of a wide range of micro-organisms and hence, important component of defense mechanism. Shows antibacterial properties against E.coli, K.pneumoniae, P.aeruginosa, S.sonnei, S.saphrophyticus, S.epidermidis and S.dysenteriae. May protect the udder from infection and may promote growth in newborns. May be implicated in airway host defense against infection. May contribute to maintaining an appropriate H2O2 cellular level, therefore protecting cells from H2O2-caused injuries and inflammation. The protein is Lactoperoxidase of Bubalus bubalis (Domestic water buffalo).